Consider the following 360-residue polypeptide: Ribosomal RNA large subunit methyltransferase M (360 aa).

Residues Ser187, 220–223 (CPGG), Asp239, Asp259, and Asp276 contribute to the S-adenosyl-L-methionine site. Residue Lys305 is the Proton acceptor of the active site.

It belongs to the class I-like SAM-binding methyltransferase superfamily. RNA methyltransferase RlmE family. RlmM subfamily. In terms of assembly, monomer.

It localises to the cytoplasm. The enzyme catalyses cytidine(2498) in 23S rRNA + S-adenosyl-L-methionine = 2'-O-methylcytidine(2498) in 23S rRNA + S-adenosyl-L-homocysteine + H(+). Catalyzes the 2'-O-methylation at nucleotide C2498 in 23S rRNA. The sequence is that of Ribosomal RNA large subunit methyltransferase M from Shewanella halifaxensis (strain HAW-EB4).